The sequence spans 806 residues: Acetyl-CoA decarbonylase/synthase complex subunit alpha 1 (806 aa).

Cys-73, Cys-76, Cys-77, Cys-79, Cys-84, and Cys-94 together coordinate [4Fe-4S] cluster. His-117 is a CO binding site. [Ni-4Fe-4S] cluster-binding residues include His-250, Cys-278, and Cys-323. 4Fe-4S ferredoxin-type domains follow at residues 407 to 436 (DEEFADWVAKCADCGACMIACPEELDIPEA) and 446 to 475 (SYLEELHDQCIGCRRCEQVCKKEIPILNII). [4Fe-4S] cluster-binding residues include Cys-417, Cys-420, Cys-423, Cys-427, Cys-455, Cys-458, Cys-461, and Cys-465. Residues Cys-523, Cys-552, and Cys-587 each contribute to the [Ni-4Fe-4S] cluster site.

The protein belongs to the Ni-containing carbon monoxide dehydrogenase family. As to quaternary structure, heterotetramer of two alpha and two epsilon subunits. The ACDS complex is made up of alpha, epsilon, beta, gamma and delta subunits with a probable stoichiometry of (alpha(2)epsilon(2))(4)-beta(8)-(gamma(1)delta(1))(8). [4Fe-4S] cluster is required as a cofactor. [Ni-4Fe-4S] cluster serves as cofactor.

It catalyses the reaction CO + 2 oxidized [2Fe-2S]-[ferredoxin] + H2O = 2 reduced [2Fe-2S]-[ferredoxin] + CO2 + 2 H(+). The protein operates within one-carbon metabolism; methanogenesis from acetate. Functionally, part of the ACDS complex that catalyzes the reversible cleavage of acetyl-CoA, allowing growth on acetate as sole source of carbon and energy. The alpha-epsilon subcomponent functions as a carbon monoxide dehydrogenase. The sequence is that of Acetyl-CoA decarbonylase/synthase complex subunit alpha 1 from Methanosarcina acetivorans (strain ATCC 35395 / DSM 2834 / JCM 12185 / C2A).